Consider the following 634-residue polypeptide: Chaperone protein HtpG (634 aa).

The a; substrate-binding stretch occupies residues 1–344 (MSETATQNKE…SNDLPLNVSR (344 aa)). Residues 345–561 (EILQDNKVTQ…DFEMGTQMAK (217 aa)) are b. The interval 562–634 (LLEAAGQAAP…GAINELLTKR (73 aa)) is c.

This sequence belongs to the heat shock protein 90 family. Homodimer.

Its subcellular location is the cytoplasm. Molecular chaperone. Has ATPase activity. This chain is Chaperone protein HtpG, found in Vibrio atlanticus (strain LGP32) (Vibrio splendidus (strain Mel32)).